Consider the following 332-residue polypeptide: L-lactate dehydrogenase A chain (332 aa).

The residue at position 5 (K5) is an N6-acetyllysine; alternate. K5 bears the N6-succinyllysine; alternate mark. Residue K14 is modified to N6-acetyllysine. Position 18 is a phosphothreonine (T18). NAD(+) is bound at residue 29–57; the sequence is GAVGMACAISILMKDLADELALVDVIEDK. Residue K57 is modified to N6-acetyllysine; alternate. K57 participates in a covalent cross-link: Glycyl lysine isopeptide (Lys-Gly) (interchain with G-Cter in SUMO2); alternate. K81 bears the N6-acetyllysine mark. R99 provides a ligand contact to NAD(+). R106 contributes to the substrate binding site. N6-acetyllysine; alternate is present on K118. N6-succinyllysine; alternate is present on K118. An N6-acetyllysine modification is found at K126. Residue N138 coordinates NAD(+). Residues N138 and R169 each coordinate substrate. Catalysis depends on H193, which acts as the Proton acceptor. K232 carries the N6-acetyllysine modification. Y239 carries the phosphotyrosine modification. K243 carries the N6-acetyllysine modification. T248 lines the substrate pocket. 2 positions are modified to phosphothreonine: T309 and T322.

This sequence belongs to the LDH/MDH superfamily. LDH family. As to quaternary structure, homotetramer. Interacts with PTEN upstream reading frame protein MP31. ISGylated.

The protein localises to the cytoplasm. The enzyme catalyses (S)-lactate + NAD(+) = pyruvate + NADH + H(+). It participates in fermentation; pyruvate fermentation to lactate; (S)-lactate from pyruvate: step 1/1. Functionally, interconverts simultaneously and stereospecifically pyruvate and lactate with concomitant interconversion of NADH and NAD(+). In Monodelphis domestica (Gray short-tailed opossum), this protein is L-lactate dehydrogenase A chain (LDHA).